The sequence spans 357 residues: tRNA-specific 2-thiouridylase MnmA (357 aa).

ATP is bound by residues alanine 7–serine 14 and methionine 33. The active-site Nucleophile is the cysteine 101. Cysteine 101 and cysteine 198 are disulfide-bonded. Position 125 (glycine 125) interacts with ATP. Residues lysine 148 to glutamine 150 form an interaction with tRNA region. Cysteine 198 acts as the Cysteine persulfide intermediate in catalysis.

It belongs to the MnmA/TRMU family.

The protein localises to the cytoplasm. The enzyme catalyses S-sulfanyl-L-cysteinyl-[protein] + uridine(34) in tRNA + AH2 + ATP = 2-thiouridine(34) in tRNA + L-cysteinyl-[protein] + A + AMP + diphosphate + H(+). Functionally, catalyzes the 2-thiolation of uridine at the wobble position (U34) of tRNA, leading to the formation of s(2)U34. The chain is tRNA-specific 2-thiouridylase MnmA from Herpetosiphon aurantiacus (strain ATCC 23779 / DSM 785 / 114-95).